Consider the following 473-residue polypeptide: MFS transporter prlG (473 aa).

The span at 1-12 shows a compositional bias: basic and acidic residues; sequence MSSTDAEAKNEE. Positions 1–27 are disordered; it reads MSSTDAEAKNEEAVDWEGPDDPENPRN. Residues 13 to 22 are compositionally biased toward acidic residues; that stretch reads AVDWEGPDDP. 11 consecutive transmembrane segments (helical) span residues 37 to 57, 71 to 91, 101 to 121, 125 to 145, 163 to 183, 191 to 211, 266 to 286, 305 to 325, 345 to 365, 372 to 392, and 409 to 429; these read VLLV…FAPG, IVAS…PFLL, LIIY…CALS, AMFL…MAIG, ALFG…GGFV, WTFW…LVLM, PIVF…YLLF, GLAY…FAVL, LILM…YGWS, WIVP…ILMP, and ALAA…LAGP.

It belongs to the major facilitator superfamily.

The protein localises to the cell membrane. In terms of biological role, efflux pump that might be required for efficient secretion of pyrrolocin or other secondary metabolies produced by the pyrrolocin gene cluster. This is MFS transporter prlG from Fungal sp. (strain NRRL 50135).